The primary structure comprises 289 residues: ATP synthase gamma chain (289 aa).

The protein belongs to the ATPase gamma chain family. In terms of assembly, F-type ATPases have 2 components, CF(1) - the catalytic core - and CF(0) - the membrane proton channel. CF(1) has five subunits: alpha(3), beta(3), gamma(1), delta(1), epsilon(1). CF(0) has three main subunits: a, b and c.

The protein resides in the cell inner membrane. Produces ATP from ADP in the presence of a proton gradient across the membrane. The gamma chain is believed to be important in regulating ATPase activity and the flow of protons through the CF(0) complex. The protein is ATP synthase gamma chain of Azobacteroides pseudotrichonymphae genomovar. CFP2.